The chain runs to 116 residues: Class I hydrophobin 1 (116 aa).

The first 19 residues, 1–19 (MLFKQAILVATTLTTLAVA), serve as a signal peptide directing secretion. Cystine bridges form between cysteine 35–cysteine 95, cysteine 42–cysteine 89, cysteine 43–cysteine 76, and cysteine 96–cysteine 109. N-linked (GlcNAc...) asparagine glycosylation is found at asparagine 44 and asparagine 100.

The protein belongs to the fungal hydrophobin family. As to quaternary structure, self-assembles to form functional amyloid fibrils called rodlets. Self-assembly into fibrillar rodlets occurs spontaneously at hydrophobic:hydrophilic interfaces and the rodlets further associate laterally to form amphipathic monolayers.

Its subcellular location is the secreted. The protein resides in the cell wall. In terms of biological role, aerial growth, conidiation, and dispersal of filamentous fungi in the environment rely upon a capability of their secreting small amphipathic proteins called hydrophobins (HPBs) with low sequence identity. Class I can self-assemble into an outermost layer of rodlet bundles on aerial cell surfaces, conferring cellular hydrophobicity that supports fungal growth, development and dispersal; whereas Class II form highly ordered films at water-air interfaces through intermolecular interactions but contribute nothing to the rodlet structure. The sequence is that of Class I hydrophobin 1 from Pleurotus ostreatus (strain PC15) (Oyster mushroom).